The sequence spans 344 residues: Phenylalanine--tRNA ligase alpha subunit (344 aa).

Glu-255 lines the Mg(2+) pocket.

Belongs to the class-II aminoacyl-tRNA synthetase family. Phe-tRNA synthetase alpha subunit type 1 subfamily. As to quaternary structure, tetramer of two alpha and two beta subunits. Mg(2+) is required as a cofactor.

It localises to the cytoplasm. The enzyme catalyses tRNA(Phe) + L-phenylalanine + ATP = L-phenylalanyl-tRNA(Phe) + AMP + diphosphate + H(+). The chain is Phenylalanine--tRNA ligase alpha subunit from Phocaeicola vulgatus (strain ATCC 8482 / DSM 1447 / JCM 5826 / CCUG 4940 / NBRC 14291 / NCTC 11154) (Bacteroides vulgatus).